A 161-amino-acid chain; its full sequence is Nucleotide-binding protein Gura_0717 (161 aa).

Belongs to the YajQ family.

Its function is as follows. Nucleotide-binding protein. In Geotalea uraniireducens (strain Rf4) (Geobacter uraniireducens), this protein is Nucleotide-binding protein Gura_0717.